The sequence spans 407 residues: Phosphopentomutase (407 aa).

Mn(2+) is bound by residues aspartate 11, aspartate 305, histidine 310, aspartate 346, histidine 347, and histidine 358.

The protein belongs to the phosphopentomutase family. Mn(2+) is required as a cofactor.

Its subcellular location is the cytoplasm. The catalysed reaction is 2-deoxy-alpha-D-ribose 1-phosphate = 2-deoxy-D-ribose 5-phosphate. It catalyses the reaction alpha-D-ribose 1-phosphate = D-ribose 5-phosphate. Its pathway is carbohydrate degradation; 2-deoxy-D-ribose 1-phosphate degradation; D-glyceraldehyde 3-phosphate and acetaldehyde from 2-deoxy-alpha-D-ribose 1-phosphate: step 1/2. Isomerase that catalyzes the conversion of deoxy-ribose 1-phosphate (dRib-1-P) and ribose 1-phosphate (Rib-1-P) to deoxy-ribose 5-phosphate (dRib-5-P) and ribose 5-phosphate (Rib-5-P), respectively. The protein is Phosphopentomutase of Legionella pneumophila subsp. pneumophila (strain Philadelphia 1 / ATCC 33152 / DSM 7513).